The following is a 121-amino-acid chain: Basic phospholipase A2 homolog blK-PLA2 (121 aa).

Intrachain disulfides connect C26–C115, C28–C44, C43–C95, C49–C121, C50–C88, C57–C81, and C75–C86. Residues K105–K117 form an important for membrane-damaging activities in eukaryotes and bacteria; heparin-binding region.

It belongs to the phospholipase A2 family. Group II subfamily. K49 sub-subfamily. In terms of assembly, homodimer; non-covalently linked. Expressed by the venom gland.

The protein resides in the secreted. Snake venom phospholipase A2 (PLA2) homolog that lacks enzymatic activity. Shows myotoxic and edema-inducing activities in vivo. A model of myotoxic mechanism has been proposed: an apo Lys49-PLA2 is activated by the entrance of a hydrophobic molecule (e.g. fatty acid) at the hydrophobic channel of the protein leading to a reorientation of a monomer. This reorientation causes a transition between 'inactive' to 'active' states, causing alignment of C-terminal and membrane-docking sites (MDoS) side-by-side and putting the membrane-disruption sites (MDiS) in the same plane, exposed to solvent and in a symmetric position for both monomers. The MDoS region stabilizes the toxin on membrane by the interaction of charged residues with phospholipid head groups. Subsequently, the MDiS region destabilizes the membrane with penetration of hydrophobic residues. This insertion causes a disorganization of the membrane, allowing an uncontrolled influx of ions (i.e. calcium and sodium), and eventually triggering irreversible intracellular alterations and cell death. The protein is Basic phospholipase A2 homolog blK-PLA2 of Bothrops leucurus (Whitetail lancehead).